The chain runs to 434 residues: Eukaryotic peptide chain release factor subunit 1-1 (434 aa).

The protein belongs to the eukaryotic release factor 1 family. Heterodimer of two subunits, one of which binds GTP.

It is found in the cytoplasm. Directs the termination of nascent peptide synthesis (translation) in response to the termination codons UAA, UAG and UGA. Modulates plant growth and development. This chain is Eukaryotic peptide chain release factor subunit 1-1, found in Brassica oleracea var. botrytis (Cauliflower).